A 528-amino-acid chain; its full sequence is Putative galacturonosyltransferase 2 (528 aa).

Belongs to the glycosyltransferase 8 family.

It participates in glycan metabolism; pectin biosynthesis. Its function is as follows. May be involved in pectin and/or xylans biosynthesis in cell walls. The polypeptide is Putative galacturonosyltransferase 2 (GAUT2) (Arabidopsis thaliana (Mouse-ear cress)).